Reading from the N-terminus, the 341-residue chain is NADH-quinone oxidoreductase subunit H 2 (341 aa).

8 helical membrane passes run 13–33, 82–102, 115–135, 161–181, 190–210, 248–268, 277–297, and 317–337; these read IIVI…IAYI, GVFL…WAVI, VGVL…IMAG, IGFV…TAIV, MLGW…VSAL, YVAI…GWLP, WVPG…LFAM, and VFLP…QFAG.

It belongs to the complex I subunit 1 family. In terms of assembly, NDH-1 is composed of 14 different subunits. Subunits NuoA, H, J, K, L, M, N constitute the membrane sector of the complex.

The protein resides in the cell inner membrane. It catalyses the reaction a quinone + NADH + 5 H(+)(in) = a quinol + NAD(+) + 4 H(+)(out). Its function is as follows. NDH-1 shuttles electrons from NADH, via FMN and iron-sulfur (Fe-S) centers, to quinones in the respiratory chain. The immediate electron acceptor for the enzyme in this species is believed to be ubiquinone. Couples the redox reaction to proton translocation (for every two electrons transferred, four hydrogen ions are translocated across the cytoplasmic membrane), and thus conserves the redox energy in a proton gradient. This subunit may bind ubiquinone. This is NADH-quinone oxidoreductase subunit H 2 from Rhodopseudomonas palustris (strain BisB5).